The chain runs to 537 residues: uncharacterized protein (537 aa).

Belongs to the RuBisCO large chain family. Type IV subfamily.

Functionally, unknown. Probably does not have RuBisCO activity. This is an uncharacterized protein from Symbiodinium sp. (Dinoflagellate).